The following is a 177-amino-acid chain: uncharacterized protein (177 aa).

The segment covering Gln-100 to His-115 has biased composition (low complexity). The disordered stretch occupies residues Gln-100–Lys-135. Residues Trp-141 to Tyr-158 traverse the membrane as a helical segment.

Its subcellular location is the membrane. This is an uncharacterized protein from Aedes vexans (Inland floodwater mosquito).